A 215-amino-acid chain; its full sequence is Triosephosphate isomerase (215 aa).

The active-site Electrophile is His-82. Glu-153 (proton acceptor) is an active-site residue.

It belongs to the triosephosphate isomerase family. As to quaternary structure, homodimer.

It catalyses the reaction D-glyceraldehyde 3-phosphate = dihydroxyacetone phosphate. Its pathway is carbohydrate biosynthesis; gluconeogenesis. It participates in carbohydrate degradation; glycolysis; D-glyceraldehyde 3-phosphate from glycerone phosphate: step 1/1. This Heliothis virescens (Tobacco budworm moth) protein is Triosephosphate isomerase (Tpi).